The primary structure comprises 235 residues: Orotidine 5'-phosphate decarboxylase (235 aa).

Substrate is bound by residues aspartate 12, lysine 34, 61–70 (DMKLLDIDNT), threonine 116, arginine 177, glutamine 186, glycine 206, and arginine 207. Lysine 63 acts as the Proton donor in catalysis.

Belongs to the OMP decarboxylase family. Type 1 subfamily. In terms of assembly, homodimer.

It catalyses the reaction orotidine 5'-phosphate + H(+) = UMP + CO2. Its pathway is pyrimidine metabolism; UMP biosynthesis via de novo pathway; UMP from orotate: step 2/2. In terms of biological role, catalyzes the decarboxylation of orotidine 5'-monophosphate (OMP) to uridine 5'-monophosphate (UMP). The chain is Orotidine 5'-phosphate decarboxylase from Rhizobium johnstonii (strain DSM 114642 / LMG 32736 / 3841) (Rhizobium leguminosarum bv. viciae).